We begin with the raw amino-acid sequence, 385 residues long: GTPase Obg (385 aa).

The Obg domain occupies 1–159 (MKFVDEVEIR…RNLKLELLLL (159 aa)). Residues 160–333 (ADVGLLGLPN…LIHDVMTLLE (174 aa)) enclose the OBG-type G domain. GTP is bound by residues 166 to 173 (GLPNAGKS), 191 to 195 (FTTLI), 213 to 216 (DIPG), 283 to 286 (NKID), and 314 to 316 (SAI). Positions 173 and 193 each coordinate Mg(2+).

Belongs to the TRAFAC class OBG-HflX-like GTPase superfamily. OBG GTPase family. In terms of assembly, monomer. Requires Mg(2+) as cofactor.

It localises to the cytoplasm. In terms of biological role, an essential GTPase which binds GTP, GDP and possibly (p)ppGpp with moderate affinity, with high nucleotide exchange rates and a fairly low GTP hydrolysis rate. Plays a role in control of the cell cycle, stress response, ribosome biogenesis and in those bacteria that undergo differentiation, in morphogenesis control. The polypeptide is GTPase Obg (Pseudoalteromonas translucida (strain TAC 125)).